The chain runs to 1161 residues: Cingulin (1161 aa).

The head stretch occupies residues 1-403 (MSSLSADRKP…SLIHERFCGV (403 aa)). 6 disordered regions span residues 29 to 53 (GGFPDKSRLANGVGGVSNGTSSPSK), 79 to 309 (SYGV…LGRD), 649 to 678 (QSELEKQKAETLKKQEELKSATRASEKRET), 699 to 721 (SKAIEKTQQPLVSDQTKDPESNL), 739 to 773 (RLHSSVPDSSSSDALEEENRSLKTQLEESRRAASR), and 1123 to 1161 (QSRRSTLGSTLSSDEEDNYSDTKSITSILTDSPLQTTSC). A ZIM motif is present at residues 51 to 65 (PSKYGVAVRVQGISG). Composition is skewed to polar residues over residues 84 to 104 (LKTQPQIQSAPPVVSQTSPYN) and 117 to 129 (PQGSYNPTDQPSS). Low complexity predominate over residues 189–203 (NGIGSSLNGTGLNGS). Residues 273–305 (EASSTSPTINPYAPNTSATVPKLNSTKPSSTGS) are compositionally biased toward polar residues. The stretch at 413–1128 (SNMKTELEQA…RKIQQSRRST (716 aa)) forms a coiled coil. Over residues 742–751 (SSVPDSSSSD) the composition is skewed to low complexity. Positions 755–773 (EENRSLKTQLEESRRAASR) are enriched in basic and acidic residues. Positions 1122–1161 (QQSRRSTLGSTLSSDEEDNYSDTKSITSILTDSPLQTTSC) are tail. Residues 1124-1134 (SRRSTLGSTLS) show a composition bias toward low complexity. Positions 1143–1161 (DTKSITSILTDSPLQTTSC) are enriched in polar residues.

Belongs to the cingulin family. As to quaternary structure, homodimer.

Its subcellular location is the cell junction. It is found in the tight junction. Its function is as follows. Probably plays a role in the formation and regulation of the tight junction (TJ) paracellular permeability barrier. Note=Localizes to the apical junction complex composed of tight and adherens junctions. The sequence is that of Cingulin from Danio rerio (Zebrafish).